Consider the following 328-residue polypeptide: 4-hydroxythreonine-4-phosphate dehydrogenase (328 aa).

Residues histidine 134 and threonine 135 each coordinate substrate. A divalent metal cation contacts are provided by histidine 164, histidine 209, and histidine 264. Residues lysine 272, asparagine 281, and arginine 290 each coordinate substrate.

This sequence belongs to the PdxA family. Homodimer. The cofactor is Zn(2+). Mg(2+) serves as cofactor. It depends on Co(2+) as a cofactor.

It localises to the cytoplasm. It carries out the reaction 4-(phosphooxy)-L-threonine + NAD(+) = 3-amino-2-oxopropyl phosphate + CO2 + NADH. It functions in the pathway cofactor biosynthesis; pyridoxine 5'-phosphate biosynthesis; pyridoxine 5'-phosphate from D-erythrose 4-phosphate: step 4/5. Catalyzes the NAD(P)-dependent oxidation of 4-(phosphooxy)-L-threonine (HTP) into 2-amino-3-oxo-4-(phosphooxy)butyric acid which spontaneously decarboxylates to form 3-amino-2-oxopropyl phosphate (AHAP). The chain is 4-hydroxythreonine-4-phosphate dehydrogenase from Shewanella denitrificans (strain OS217 / ATCC BAA-1090 / DSM 15013).